The chain runs to 622 residues: Golgin subfamily A member 6-like protein 7 (622 aa).

3 disordered regions span residues 1–82, 251–496, and 511–580; these read MMSE…QQAL, RKHE…RKQV, and EKMQ…HDNR. 6 stretches are compositionally biased toward basic and acidic residues: residues 57–74, 251–275, 283–332, 339–367, 374–388, and 395–420; these read SPED…ENKA, RKHE…REQE, and EQMR…KQEE. Positions 100-534 form a coiled coil; it reads KTELETALHD…EKRREKKERM (435 aa). Residues 477 to 489 show a composition bias toward acidic residues; the sequence is QMGEQEEQMGEQE. 2 stretches are compositionally biased toward basic and acidic residues: residues 511-546 and 567-580; these read EKMQ…ERCS and PARE…HDNR.

Belongs to the GOLGA6 family.

The sequence is that of Golgin subfamily A member 6-like protein 7 from Homo sapiens (Human).